The primary structure comprises 982 residues: Protein phosphatase 1 regulatory subunit 12B (982 aa).

Basic and acidic residues predominate over residues 1-24 (MAELEHLGGKRAESARMRRAEQLR). The segment at 1 to 50 (MAELEHLGGKRAESARMRRAEQLRRWRGSLTEQEPAERRGAGRQPLTRRG) is disordered. Serine 29 is modified (phosphoserine). ANK repeat units lie at residues 57–86 (EDGA…DINT), 90–119 (DGLT…NVNQ), 123–152 (EGWT…SVGI), 216–245 (SGAT…ELNV), and 249–278 (DGWT…DMDI). Disordered stretches follow at residues 342 to 517 (EETP…RESA), 556 to 579 (RTPH…SSTP), 606 to 864 (TDSS…EARE), and 918 to 948 (AQQK…KMSE). Positions 362 to 374 (SEEEEGEDEASES) are enriched in acidic residues. Residues 375 to 385 (ETEKEADKKPE) show a composition bias toward basic and acidic residues. A compositionally biased stretch (polar residues) spans 389-401 (NHSNSESKSSITE). Residues 411 to 421 (FSASSARRFSS) are compositionally biased toward low complexity. At threonine 445 the chain carries Phosphothreonine. The segment covering 466–478 (SSIYRSSSSPRIS) has biased composition (low complexity). Residues 482–491 (DNKDKERENK) show a composition bias toward basic and acidic residues. Residues 623-632 (VRDEEAESLR) are compositionally biased toward basic and acidic residues. Residues 633–643 (KARSRQARQTR) show a composition bias toward basic residues. A Phosphothreonine modification is found at threonine 646. Basic and acidic residues predominate over residues 656–680 (EAERTFSRSRAERQAQEQPREKPTD). The span at 731 to 742 (TTPASPSTSRPS) shows a compositional bias: low complexity. Polar residues predominate over residues 743-755 (LYTSSHLLWTNRF). The segment covering 797–807 (ERRRPKERRRG) has biased composition (basic residues). Threonine 808 carries the phosphothreonine modification. A compositionally biased stretch (basic and acidic residues) spans 824–836 (EEVKETWHERLSR). A Phosphoserine modification is found at serine 839. The span at 840 to 849 (GGSNPTTSDS) shows a compositional bias: polar residues. 3 stretches are compositionally biased toward basic and acidic residues: residues 850-864 (YGDR…EARE), 918-927 (AQQKQEKTSD), and 933-948 (EMEK…KMSE). Serine 947 carries the post-translational modification Phosphoserine.

As to quaternary structure, PP1 comprises a catalytic subunit, PPP1CA, PPP1CB or PPP1CC, and one or several targeting or regulatory subunits. PPP1R12B mediates binding to myosin. Isoform 3 and isoform 4 bind PPP1R12A, but not isoform 1 of PPP1R12B itself. Binds IL16. In terms of tissue distribution, detected in skeletal muscle, fetal and adult heart, brain, placenta, kidney, spleen, thymus, pancreas and lung. Isoform 3 and isoform 4 are heart specific.

The protein localises to the cytoplasm. The protein resides in the cytoskeleton. Its subcellular location is the stress fiber. In terms of biological role, regulates myosin phosphatase activity. Augments Ca(2+) sensitivity of the contractile apparatus. This Homo sapiens (Human) protein is Protein phosphatase 1 regulatory subunit 12B (PPP1R12B).